The primary structure comprises 66 residues: Large ribosomal subunit protein bL35 (66 aa).

It belongs to the bacterial ribosomal protein bL35 family.

This chain is Large ribosomal subunit protein bL35, found in Hyphomonas neptunium (strain ATCC 15444).